Reading from the N-terminus, the 238-residue chain is Uridylate kinase (238 aa).

12 to 15 (KLSG) serves as a coordination point for ATP. Residue Gly54 coordinates UMP. ATP is bound by residues Gly55 and Arg59. Residues Asp74 and 135-142 (TGNPYFTT) contribute to the UMP site. The ATP site is built by Thr162, Asn163, Tyr168, and Asp171.

The protein belongs to the UMP kinase family. As to quaternary structure, homohexamer.

It is found in the cytoplasm. It catalyses the reaction UMP + ATP = UDP + ADP. Its pathway is pyrimidine metabolism; CTP biosynthesis via de novo pathway; UDP from UMP (UMPK route): step 1/1. With respect to regulation, inhibited by UTP. Its function is as follows. Catalyzes the reversible phosphorylation of UMP to UDP. This chain is Uridylate kinase, found in Nitrobacter winogradskyi (strain ATCC 25391 / DSM 10237 / CIP 104748 / NCIMB 11846 / Nb-255).